The primary structure comprises 402 residues: NAD-dependent protein deacetylase sirtuin-7 (402 aa).

The disordered stretch occupies residues 1–23 (MAAGGGLSRSERKAAERVRRLRE). A compositionally biased stretch (basic and acidic residues) spans 9–23 (RSERKAAERVRRLRE). The Deacetylase sirtuin-type domain occupies 83-330 (PEELRRKVRE…QLLMNELGLE (248 aa)). Residues 108-127 (GAGI…NGVW) and 168-171 (QNCD) each bind NAD(+). Residue H188 is the Proton acceptor of the active site. Residues C196, C199, C226, and C229 each contribute to the Zn(2+) site. Residues 269–271 (GSS), 298–300 (NLQ), and C316 each bind NAD(+). Residues 355–402 (SHSRKSLCRSREEAPPGDQSDPLASAPPILGGWFGRGCAKRAKRKKVA) are disordered. Position 390 is an asymmetric dimethylarginine; alternate (R390). An Omega-N-methylarginine; alternate modification is found at R390. Positions 392–402 (CAKRAKRKKVA) are enriched in basic residues.

The protein belongs to the sirtuin family. Class IV subfamily. In terms of assembly, interacts with UBTF and the RNA polymerase I complex. Interacts with components of the B-WICH complex, such as MYBBP1A, SMARCA5/SNF2H and BAZ1B/WSTF. Interacts with ELK4, leading to stabilization at target promoters for H3K18Ac deacetylation. Interacts with histone H2A and/or histone H2B. Interacts with DNMT1. Interacts with SIRT1. Zn(2+) serves as cofactor. Phosphorylated during mitosis. In terms of processing, methylation at Arg-390 by PRMT6 inhibits the H3K18Ac histone deacetylase activity, promoting mitochondria biogenesis and maintaining mitochondria respiration. Post-translationally, ubiquitinated via 'Lys-63'-linked ubiquitin chains. Deubiquitinated by USP7, inhibiting the H3K18Ac histone deacetylase activity and regulating gluconeogenesis. Ubiquitinated by E3 ubiquitin-protein ligase complex containing FBXO7; leading to proteasomal degradation. In terms of tissue distribution, detected in liver, spleen and testis. Detected in embryos.

The protein resides in the nucleus. The protein localises to the nucleolus. It localises to the nucleoplasm. Its subcellular location is the chromosome. It is found in the cytoplasm. The catalysed reaction is N(6)-acetyl-L-lysyl-[protein] + NAD(+) + H2O = 2''-O-acetyl-ADP-D-ribose + nicotinamide + L-lysyl-[protein]. It catalyses the reaction N(6)-glutaryl-L-lysyl-[protein] + NAD(+) + H2O = 2''-O-glutaryl-ADP-D-ribose + nicotinamide + L-lysyl-[protein]. It carries out the reaction N(6)-succinyl-L-lysyl-[protein] + NAD(+) + H2O = 2''-O-succinyl-ADP-D-ribose + nicotinamide + L-lysyl-[protein]. The enzyme catalyses N(6)-propanoyl-L-lysyl-[protein] + NAD(+) + H2O = 3''-O-propanoyl-ADP-D-ribose + nicotinamide + L-lysyl-[protein]. The catalysed reaction is N(6)-decanoyl-L-lysyl-[protein] + NAD(+) + H2O = 2''-O-decanoyl-ADP-D-ribose + nicotinamide + L-lysyl-[protein]. With respect to regulation, NAD-dependent protein-lysine deacetylase and deacylase activities are activated by nucleic acids. Histone deacetylase activity is activated by DNA. Protein-lysine deacylase activity is activated by RNA. H3K18Ac histone deacetylase activity is inhibited by methylation at Arg-390. H3K18Ac histone deacetylase activity is inhibited by deubiquitination by USP7. NAD-dependent protein-lysine deacylase that can act both as a deacetylase or deacylase (desuccinylase, depropionylase and deglutarylase), depending on the context. Also acts as a dedecanoylase. Specifically mediates deacetylation of histone H3 at 'Lys-18' (H3K18Ac). In contrast to other histone deacetylases, displays strong preference for a specific histone mark, H3K18Ac, directly linked to control of gene expression. H3K18Ac is mainly present around the transcription start site of genes and has been linked to activation of nuclear hormone receptors; SIRT7 thereby acts as a transcription repressor. Moreover, H3K18 hypoacetylation has been reported as a marker of malignancy in various cancers and seems to maintain the transformed phenotype of cancer cells. Also able to mediate deacetylation of histone H3 at 'Lys-36' (H3K36Ac) in the context of nucleosomes. Also mediates deacetylation of non-histone proteins, such as ATM, CDK9, DDX21, DDB1, FBL, FKBP5/FKBP51, GABPB1, RAN, RRP9/U3-55K and POLR1E/PAF53. Enriched in nucleolus where it stimulates transcription activity of the RNA polymerase I complex. Acts by mediating the deacetylation of the RNA polymerase I subunit POLR1E/PAF53, thereby promoting the association of RNA polymerase I with the rDNA promoter region and coding region. In response to metabolic stress, SIRT7 is released from nucleoli leading to hyperacetylation of POLR1E/PAF53 and decreased RNA polymerase I transcription. Required to restore the transcription of ribosomal RNA (rRNA) at the exit from mitosis. Promotes pre-ribosomal RNA (pre-rRNA) cleavage at the 5'-terminal processing site by mediating deacetylation of RRP9/U3-55K, a core subunit of the U3 snoRNP complex. Mediates 'Lys-37' deacetylation of Ran, thereby regulating the nuclear export of NF-kappa-B subunit RELA/p65. Acts as a regulator of DNA damage repair by mediating deacetylation of ATM during the late stages of DNA damage response, promoting ATM dephosphorylation and deactivation. May also deacetylate p53/TP53 and promotes cell survival, however such data need additional confirmation. Suppresses the activity of the DCX (DDB1-CUL4-X-box) E3 ubiquitin-protein ligase complexes by mediating deacetylation of DDB1, which prevents the interaction between DDB1 and CUL4 (CUL4A or CUL4B). Activates RNA polymerase II transcription by mediating deacetylation of CDK9, thereby promoting 'Ser-2' phosphorylation of the C-terminal domain (CTD) of RNA polymerase II. Deacetylates FBL, promoting histone-glutamine methyltransferase activity of FBL. Acts as a regulator of mitochondrial function by catalyzing deacetylation of GABPB1. Regulates Akt/AKT1 activity by mediating deacetylation of FKBP5/FKBP51. Required to prevent R-loop-associated DNA damage and transcription-associated genomic instability by mediating deacetylation and subsequent activation of DDX21, thereby overcoming R-loop-mediated stalling of RNA polymerases. In addition to protein deacetylase activity, also acts as protein-lysine deacylase. Acts as a protein depropionylase by mediating depropionylation of Osterix (SP7), thereby regulating bone formation by osteoblasts. Acts as a histone deglutarylase by mediating deglutarylation of histone H4 on 'Lys-91' (H4K91glu); a mark that destabilizes nucleosomes by promoting dissociation of the H2A-H2B dimers from nucleosomes. Acts as a histone desuccinylase: in response to DNA damage, recruited to DNA double-strand breaks (DSBs) and catalyzes desuccinylation of histone H3 on 'Lys-122' (H3K122succ), thereby promoting chromatin condensation and DSB repair. Also promotes DSB repair by promoting H3K18Ac deacetylation, regulating non-homologous end joining (NHEJ). Along with its role in DNA repair, required for chromosome synapsis during prophase I of female meiosis by catalyzing H3K18Ac deacetylation. Involved in transcriptional repression of LINE-1 retrotransposon via H3K18Ac deacetylation, and promotes their association with the nuclear lamina. Required to stabilize ribosomal DNA (rDNA) heterochromatin and prevent cellular senescence induced by rDNA instability. Acts as a negative regulator of SIRT1 by preventing autodeacetylation of SIRT1, restricting SIRT1 deacetylase activity. This is NAD-dependent protein deacetylase sirtuin-7 from Mus musculus (Mouse).